Consider the following 77-residue polypeptide: UPF0291 protein RBAM_017680 (77 aa).

Residues 55-77 (IDPEGNDVTPEKLKREQQKNNLH) form a disordered region. Positions 63 to 77 (TPEKLKREQQKNNLH) are enriched in basic and acidic residues.

This sequence belongs to the UPF0291 family.

It localises to the cytoplasm. This Bacillus velezensis (strain DSM 23117 / BGSC 10A6 / LMG 26770 / FZB42) (Bacillus amyloliquefaciens subsp. plantarum) protein is UPF0291 protein RBAM_017680.